The following is a 255-amino-acid chain: Tryptophan synthase alpha chain (255 aa).

Active-site proton acceptor residues include E42 and D53.

The protein belongs to the TrpA family. In terms of assembly, tetramer of two alpha and two beta chains.

The catalysed reaction is (1S,2R)-1-C-(indol-3-yl)glycerol 3-phosphate + L-serine = D-glyceraldehyde 3-phosphate + L-tryptophan + H2O. The protein operates within amino-acid biosynthesis; L-tryptophan biosynthesis; L-tryptophan from chorismate: step 5/5. Functionally, the alpha subunit is responsible for the aldol cleavage of indoleglycerol phosphate to indole and glyceraldehyde 3-phosphate. The chain is Tryptophan synthase alpha chain from Wolinella succinogenes (strain ATCC 29543 / DSM 1740 / CCUG 13145 / JCM 31913 / LMG 7466 / NCTC 11488 / FDC 602W) (Vibrio succinogenes).